A 275-amino-acid chain; its full sequence is Undecaprenyl-diphosphatase 2 (275 aa).

7 helical membrane passes run N48–F68, G90–F110, I117–A137, I154–F174, A195–I215, I223–V243, and I254–F274.

It belongs to the UppP family.

The protein resides in the cell membrane. It catalyses the reaction di-trans,octa-cis-undecaprenyl diphosphate + H2O = di-trans,octa-cis-undecaprenyl phosphate + phosphate + H(+). Its function is as follows. Catalyzes the dephosphorylation of undecaprenyl diphosphate (UPP). Confers resistance to bacitracin. The chain is Undecaprenyl-diphosphatase 2 from Shouchella clausii (strain KSM-K16) (Alkalihalobacillus clausii).